The following is a 287-amino-acid chain: Diaminopimelate epimerase (287 aa).

Substrate is bound by residues Asn-13, Gln-46, and Asn-66. Cys-75 (proton donor) is an active-site residue. Residues 76 to 77 (GN), Asn-166, Asn-199, and 217 to 218 (ER) contribute to the substrate site. The Proton acceptor role is filled by Cys-226. 227 to 228 (GT) is a binding site for substrate.

It belongs to the diaminopimelate epimerase family. In terms of assembly, homodimer.

Its subcellular location is the cytoplasm. It carries out the reaction (2S,6S)-2,6-diaminopimelate = meso-2,6-diaminopimelate. Its pathway is amino-acid biosynthesis; L-lysine biosynthesis via DAP pathway; DL-2,6-diaminopimelate from LL-2,6-diaminopimelate: step 1/1. Functionally, catalyzes the stereoinversion of LL-2,6-diaminopimelate (L,L-DAP) to meso-diaminopimelate (meso-DAP), a precursor of L-lysine and an essential component of the bacterial peptidoglycan. This Paraburkholderia xenovorans (strain LB400) protein is Diaminopimelate epimerase.